The chain runs to 536 residues: SNW domain-containing protein 1 (536 aa).

The segment at 1–44 (MALTSFLPAPTQLSQDQLEAEERARSQRSLQTSLVSSRREPPPY) is disordered. Alanine 2 is subject to N-acetylalanine. Residue serine 14 is modified to Phosphoserine. A compositionally biased stretch (polar residues) spans 27-36 (QRSLQTSLVS). Residues 59–79 (GDGGAFPEIHVAQYPLDMGRK) form an interaction with PPIL1 region. Glycyl lysine isopeptide (Lys-Gly) (interchain with G-Cter in SUMO2) cross-links involve residues lysine 81, lysine 97, lysine 115, lysine 122, lysine 141, lysine 158, and lysine 170. An SNW region spans residues 174–339 (AQYIRYTPSQ…KARERRAGIK (166 aa)). Serine 182 and serine 190 each carry phosphoserine. A Glycyl lysine isopeptide (Lys-Gly) (interchain with G-Cter in SUMO2) cross-link involves residue lysine 193. The tract at residues 212–233 (FKINKKIPRGPPSPPAPVMHSP) is disordered. Phosphoserine occurs at positions 224, 232, and 234. Residues lysine 240, lysine 258, lysine 286, lysine 339, lysine 344, lysine 416, and lysine 441 each participate in a glycyl lysine isopeptide (Lys-Gly) (interchain with G-Cter in SUMO2) cross-link. The interval 311-386 (KMAQKEKEKH…RSKLQRNENR (76 aa)) is disordered. The residue at position 446 (serine 446) is a Phosphoserine. A Glycyl lysine isopeptide (Lys-Gly) (interchain with G-Cter in SUMO2) cross-link involves residue lysine 452. Composition is skewed to basic and acidic residues over residues 467–489 (IKTN…RGRE) and 503–530 (KFLE…EHEG). Residues 467 to 536 (IKTNRFVPDK…EHEGKKRRKE (70 aa)) form a disordered region. A phosphoserine mark is found at serine 479 and serine 481. Lysine 509 participates in a covalent cross-link: Glycyl lysine isopeptide (Lys-Gly) (interchain with G-Cter in SUMO2).

The protein belongs to the SNW family. In terms of assembly, identified in the spliceosome C complex. Associates with U4/U6-U5 tri-small nuclear ribonucleoproteins (U4/U6-U5 tri-snRNPs). Component of the minor spliceosome, which splices U12-type introns. Interacts with SKI, SMAD2,SMAD3, RBPJ, RB1, PABPN1, MAGEA1, SIRT1, FOXN3, U2AF2, PPIL1, DAXX and ATP1B4. Interacts with VDR and RXRA; preferentially associates with VDR:RXRA heterodimers. Interacts with NCOR2. Interacts with MAML1. Interacts with NOTCH1 NICD; the interaction involves multimerized NOTCH1 NICD. Forms a complex with NOTCH1 NICD and MAML1; the association is dissociated by RBPJ. Associates with positive transcription elongation factor b (P-TEFb). Component of the SNARP complex which consists at least of SNIP1, SNW1, THRAP3, BCLAF1 and PNN.

It localises to the nucleus. Functionally, involved in pre-mRNA splicing as component of the spliceosome. As a component of the minor spliceosome, involved in the splicing of U12-type introns in pre-mRNAs. Required in the specific splicing of CDKN1A pre-mRNA; the function probably involves the recruitment of U2AF2 to the mRNA. May recruit PPIL1 to the spliceosome. May be involved in cyclin-D1/CCND1 mRNA stability through the SNARP complex which associates with both the 3'end of the CCND1 gene and its mRNA. Involved in transcriptional regulation. Modulates TGF-beta-mediated transcription via association with SMAD proteins, MYOD1-mediated transcription via association with PABPN1, RB1-mediated transcriptional repression, and retinoid-X receptor (RXR)- and vitamin D receptor (VDR)-dependent gene transcription in a cell line-specific manner probably involving coactivators NCOA1 and GRIP1. Is involved in NOTCH1-mediated transcriptional activation. Binds to multimerized forms of Notch intracellular domain (NICD) and is proposed to recruit transcriptional coactivators such as MAML1 to form an intermediate preactivation complex which associates with DNA-bound CBF-1/RBPJ to form a transcriptional activation complex by releasing SNW1 and redundant NOTCH1 NICD. The protein is SNW domain-containing protein 1 (Snw1) of Mus musculus (Mouse).